The primary structure comprises 227 residues: MEGKMPLIGEKFPEMEVVTNLGNIKLPDDFKGKWFVLFSHPGDFTPVCTTEFFSFAKHHDDFKKLNTELIGLSVDSKISHIEWINWIKQNLKIDIKFPIIADPMGHVATKLGMIQAQSATQTVRAVFIVDDRSTIRAILYYPMETGRNISEILRLIKSLQMVDKYKIVTPANWPNNEIIGDNVLNPPPATQNDIEERTKKYKGYAWWLTYQDANKADVDEAKEITGE.

A Thioredoxin domain is found at 6-161; that stretch reads PLIGEKFPEM…ILRLIKSLQM (156 aa). C48 (cysteine sulfenic acid (-SOH) intermediate) is an active-site residue. R124 provides a ligand contact to substrate.

Belongs to the peroxiredoxin family. Prx6 subfamily. As to quaternary structure, homodecamer. Pentamer of dimers that assemble into a ring structure.

It localises to the cytoplasm. The enzyme catalyses a hydroperoxide + [thioredoxin]-dithiol = an alcohol + [thioredoxin]-disulfide + H2O. Thiol-specific peroxidase that catalyzes the reduction of hydrogen peroxide and organic hydroperoxides to water and alcohols, respectively. Plays a role in cell protection against oxidative stress by detoxifying peroxides. The sequence is that of Peroxiredoxin 1 from Picrophilus torridus (strain ATCC 700027 / DSM 9790 / JCM 10055 / NBRC 100828 / KAW 2/3).